Here is a 982-residue protein sequence, read N- to C-terminus: Hunchback-like protein (982 aa).

Residues 87–194 (QPGEKIHPDG…SNYQVTSEPV (108 aa)) form a disordered region. The segment covering 101 to 110 (PKEDGRKSSE) has biased composition (basic and acidic residues). Residues 111-132 (HTNSYDVSASQSPSNDGAQSDS) are compositionally biased toward polar residues. Over residues 142–152 (CMTETEMDTDE) the composition is skewed to acidic residues. Basic and acidic residues predominate over residues 153-175 (KDSTIKPEDQATPKLEEGSDSKP). The segment covering 176 to 193 (ESTSVEGTSSNYQVTSEP) has biased composition (polar residues). C2H2-type zinc fingers lie at residues 336-358 (LVCP…MNTH), 361-384 (HQCS…RESH), 538-560 (FKCK…ARTH), 567-589 (LNCQ…YRNH), 595-617 (FQCK…MKSH), 623-647 (FRCM…KYNH), and 734-756 (LKCS…SMSH). Positions 377-415 (KKHMRESHTVEEQLRAGFESEPAKESASSPKNLSLSKDG) are disordered. The segment at 811-896 (EEMDQGSDSA…PPLHSSSIVA (86 aa)) is disordered. 2 stretches are compositionally biased toward polar residues: residues 816 to 831 (GSDS…QISS) and 843 to 862 (SLEQ…SNDS). The span at 863 to 875 (AMEKDGESADDAP) shows a compositional bias: basic and acidic residues. C2H2-type zinc fingers lie at residues 929–951 (FYCD…MRFH) and 957–981 (FMCS…QARH).

It belongs to the hunchback C2H2-type zinc-finger protein family. In terms of tissue distribution, expressed primarily in ectodermal cells during embryonic and larval development.

It localises to the nucleus. Functionally, required for the late stages of development. Plays a role in the developmental timing of postembryonic hypodermal seam cell fusion events and adult alae production. This Caenorhabditis elegans protein is Hunchback-like protein.